Reading from the N-terminus, the 261-residue chain is Ribonuclease PH (261 aa).

Phosphate contacts are provided by residues arginine 87 and glycine 125–arginine 127.

Belongs to the RNase PH family. In terms of assembly, homohexameric ring arranged as a trimer of dimers.

It catalyses the reaction tRNA(n+1) + phosphate = tRNA(n) + a ribonucleoside 5'-diphosphate. Functionally, phosphorolytic 3'-5' exoribonuclease that plays an important role in tRNA 3'-end maturation. Removes nucleotide residues following the 3'-CCA terminus of tRNAs; can also add nucleotides to the ends of RNA molecules by using nucleoside diphosphates as substrates, but this may not be physiologically important. Probably plays a role in initiation of 16S rRNA degradation (leading to ribosome degradation) during starvation. The chain is Ribonuclease PH from Thermoanaerobacter pseudethanolicus (strain ATCC 33223 / 39E) (Clostridium thermohydrosulfuricum).